Consider the following 335-residue polypeptide: UPF0104 membrane protein PH1989 (335 aa).

Helical transmembrane passes span 4 to 24, 34 to 54, 62 to 82, 122 to 142, 148 to 168, 231 to 251, 266 to 286, and 304 to 324; these read YLLIIIGVTLVLILLWWAGIE, DIRFILLAILMYCISVLIWAV, GANINVSFVKVIEGVFIGIFL, ILDVIPVVVFMMLAFLYALTI, LIILGISAIILVIILLMTTVF, LYSFILWGADILKTYFIFLSL, ASIAVAMISVIPGGIGITEVV, and VTMLDRLISFWIPTLLGGILV.

It belongs to the UPF0104 family.

Its subcellular location is the cell membrane. This chain is UPF0104 membrane protein PH1989, found in Pyrococcus horikoshii (strain ATCC 700860 / DSM 12428 / JCM 9974 / NBRC 100139 / OT-3).